A 598-amino-acid chain; its full sequence is Vanadium-dependent bromoperoxidase (598 aa).

Residues F361, Q363, D365, D368, and Q370 each contribute to the Ca(2+) site. Residues K400 and R408 each contribute to the vanadate site. H480 is an active-site residue. Vanadate-binding residues include S485, G486, H487, R547, and H553. Residue H487 is part of the active site.

This sequence belongs to the vanadium-dependent haloperoxidase family. As to quaternary structure, homododecamer. It depends on Ca(2+) as a cofactor. The cofactor is vanadate.

It catalyses the reaction RH + Br(-) + H2O2 = RBr + 2 H2O.. In terms of biological role, catalyzes the halogenation of organic substrates in the presence of hydrogen peroxide. In Corallina pilulifera (Red coralline alga), this protein is Vanadium-dependent bromoperoxidase.